The sequence spans 938 residues: Glutamate receptor ionotropic, NMDA 1 (938 aa).

The first 18 residues, 1 to 18 (MSTMHLLTFALLFSCSFA), serve as a signal peptide directing secretion. The Extracellular portion of the chain corresponds to 19–559 (RAACDPKIVN…TLDSFMQPFQ (541 aa)). Residues N61, N203, N239, N276, N300, N350, N368, N440, N471, and N491 are each glycosylated (N-linked (GlcNAc...) asparagine). Residues C79 and C308 are joined by a disulfide bond. Cystine bridges form between C420–C454 and C436–C455. Residues P516, T518, and R523 each coordinate glycine. Residues 560–580 (STLWLLVGLSVHVVAVMLYLL) traverse the membrane as a helical segment. The Cytoplasmic segment spans residues 581–602 (DRFSPFGRFKVNSEEEEEDALT). The discontinuously helical intramembrane region spans 603–624 (LSSAMWFSWGVLLNSGIGEGAP). Residues 603-624 (LSSAMWFSWGVLLNSGIGEGAP) form a pore-forming region. Topologically, residues 625–630 (RSFSAR) are cytoplasmic. A helical membrane pass occupies residues 631–647 (ILGMVWAGFAMIIVASY). Over 648–812 (TANLAAFLVL…NAPATLTFEN (165 aa)) the chain is Extracellular. A glycan (N-linked (GlcNAc...) asparagine) is linked at N674. The glycine site is built by S688 and D732. A disulfide bridge connects residues C744 and C798. A glycan (N-linked (GlcNAc...) asparagine) is linked at N771. A helical transmembrane segment spans residues 813–833 (MAGVFMLVAGGIVAGIFLIFI). Over 834–938 (EIAYKRHKDA…LQLCSRHRES (105 aa)) the chain is Cytoplasmic. K877 carries the phosphoserine modification. 4 positions are modified to phosphoserine; by PKC: S889, S890, S896, and S897. A disordered region spans residues 889 to 938 (SSFKRRRSSKDTSTGGGRGALQNQKDTVLPRRAIEREEGQLQLCSRHRES). K898 is modified (phosphoserine). A compositionally biased stretch (basic and acidic residues) spans 916–927 (VLPRRAIEREEG).

This sequence belongs to the glutamate-gated ion channel (TC 1.A.10.1) family. NR1/GRIN1 subfamily. Heterotetramer; the NMDAR subunits are modular and harbor tiered domains that function in concert to regulate opening and closing of the cation-selective ion channel pore. Forms heterotetrameric channels composed of two GluN1/zeta subunits (GRIN1), and two identical GluN2/epsilon subunits (GRIN2A, GRIN2B, GRIN2C or GRIN2D) or GluN3 subunits (GRIN3A or GRIN3B) (in vitro). Can also form heterotetrameric channels that contain at least two GluN1 subunits and at least two different GluN2 subunits (or a combination of one GluN2 and one GluN3 subunits) (in vitro). In vivo, the subunit composition may vary in function of the expression levels of the different subunits. Found in a complex with GRIN2A or GRIN2B, GRIN3A and PPP2CB. Found in a complex with GRIN2A or GRIN2B and GRIN3B;. Interacts with SNX27 (via PDZ domain); the interaction is required for recycling to the plasma membrane when endocytosed and prevent degradation in lysosomes. Interacts with DLG4 and MPDZ. Interacts with LRFN1 and LRFN2. Interacts with MYZAP. Found in a complex with DLG4 and PRR7. Found in a complex with GRIN2B and PRR7. Interacts with PRR7; the interaction is reduced following NMDA receptor activity. In terms of processing, NMDA is probably regulated by C-terminal phosphorylation of an isoform of NR1 by PKC. Dephosphorylated on Ser-897 probably by protein phosphatase 2A (PPP2CB). Its phosphorylated state is influenced by the formation of the NMDAR-PPP2CB complex and the NMDAR channel activity. In terms of tissue distribution, detected throughout the brain, in brain cortex, cerebellum, thalamus and olfactory bulb.

It is found in the cell membrane. The protein resides in the postsynaptic cell membrane. The protein localises to the synaptic cell membrane. Its subcellular location is the postsynaptic density membrane. It catalyses the reaction Ca(2+)(in) = Ca(2+)(out). It carries out the reaction Na(+)(in) = Na(+)(out). The catalysed reaction is K(+)(in) = K(+)(out). Its activity is regulated as follows. NMDA glutamate receptor activity is potentiated by Zn2(+) in a dose-dependent fashion. The potentiating effect of Zn2(+) is at submicromolar concentrations and its inhibitory action is at high micromolar to millimolar concentrations. Excitatory glycine receptors are inhibited by D-serine at 100uM. Its function is as follows. Component of N-methyl-D-aspartate (NMDA) receptors (NMDARs) that function as heterotetrameric, ligand-gated cation channels with high calcium permeability and voltage-dependent block by Mg(2+). NMDARs participate in synaptic plasticity for learning and memory formation by contributing to the long-term potentiation (LTP). Channel activation requires binding of the neurotransmitter L-glutamate to the GluN2 subunit, glycine or D-serine binding to the GluN1 subunit, plus membrane depolarization to eliminate channel inhibition by Mg(2+). NMDARs mediate simultaneously the potasium efflux and the influx of calcium and sodium. Each GluN2 or GluN3 subunit confers differential attributes to channel properties, including activation, deactivation and desensitization kinetics, pH sensitivity, Ca2(+) permeability, and binding to allosteric modulators. Forms excitatory glycinergic receptor complexes with GluN3 alone which are activated by glycine binding to the GluN1 and GluN3 subunits. This chain is Glutamate receptor ionotropic, NMDA 1, found in Rattus norvegicus (Rat).